Here is a 227-residue protein sequence, read N- to C-terminus: Cytosolic-abundant heat soluble protein 106094 (227 aa).

The interval 1–28 (MEAMNMNIPRDAMFVPPPESEQNGYHEK) is disordered. Residues 90–140 (VEEARRDYAAKTRENEMLGQQYEKELERKSEAYRKHQEVEADKIRKELEKQ) are a coiled coil. 2 CAHS motif regions span residues 122–140 (YRKHQEVEADKIRKELEKQ) and 159–177 (QKRMIDLECRYAKKDMDRE). The tract at residues 198-227 (LDSSAAGTESGGHVVSQSEKFTERNREMKR) is disordered. Positions 217-227 (KFTERNREMKR) are enriched in basic and acidic residues.

It belongs to the Cytosolic-abundant heat soluble protein (CAHS) family.

It localises to the cytoplasm. In terms of biological role, CAHS proteins are cytosolic heat soluble proteins that seem to contribute to the anhydrobiosis in tardigrades, but their specific mechanisms are yet to be identified. It is possible that protection during anhydrobiosis might occur via the stabilization of vitrifying small molecules such as sugars, but not via the direct glass transition of CAHS proteins themselves. This Paramacrobiotus richtersi (Water bear) protein is Cytosolic-abundant heat soluble protein 106094.